Reading from the N-terminus, the 144-residue chain is Large ribosomal subunit protein uL13 (144 aa).

The protein belongs to the universal ribosomal protein uL13 family. In terms of assembly, part of the 50S ribosomal subunit.

Its function is as follows. This protein is one of the early assembly proteins of the 50S ribosomal subunit, although it is not seen to bind rRNA by itself. It is important during the early stages of 50S assembly. This is Large ribosomal subunit protein uL13 from Pelotomaculum thermopropionicum (strain DSM 13744 / JCM 10971 / SI).